The chain runs to 226 residues: DNA mismatch repair protein MutH (226 aa).

It belongs to the MutH family.

It localises to the cytoplasm. Its function is as follows. Sequence-specific endonuclease that cleaves unmethylated GATC sequences. It is involved in DNA mismatch repair. This is DNA mismatch repair protein MutH from Actinobacillus pleuropneumoniae serotype 5b (strain L20).